We begin with the raw amino-acid sequence, 301 residues long: tRNA dimethylallyltransferase (301 aa).

12 to 19 (GPTAVGKT) contributes to the ATP binding site. 14–19 (TAVGKT) contacts substrate. The segment at 37-40 (DSQQ) is interaction with substrate tRNA.

It belongs to the IPP transferase family. As to quaternary structure, monomer. The cofactor is Mg(2+).

It catalyses the reaction adenosine(37) in tRNA + dimethylallyl diphosphate = N(6)-dimethylallyladenosine(37) in tRNA + diphosphate. In terms of biological role, catalyzes the transfer of a dimethylallyl group onto the adenine at position 37 in tRNAs that read codons beginning with uridine, leading to the formation of N6-(dimethylallyl)adenosine (i(6)A). The sequence is that of tRNA dimethylallyltransferase from Streptococcus uberis (strain ATCC BAA-854 / 0140J).